Consider the following 139-residue polypeptide: FLYWCH family member 2 (139 aa).

2 disordered regions span residues 1 to 36 (MPQP…PRKP) and 86 to 139 (EAQR…STSP). Basic and acidic residues predominate over residues 98 to 107 (PEQKRSKQNL). Over residues 120–130 (VSSSSSEETTV) the composition is skewed to low complexity.

The polypeptide is FLYWCH family member 2 (Flywch2) (Mus musculus (Mouse)).